Here is a 141-residue protein sequence, read N- to C-terminus: ATP synthase epsilon chain (141 aa).

It belongs to the ATPase epsilon chain family. In terms of assembly, F-type ATPases have 2 components, CF(1) - the catalytic core - and CF(0) - the membrane proton channel. CF(1) has five subunits: alpha(3), beta(3), gamma(1), delta(1), epsilon(1). CF(0) has three main subunits: a, b and c.

Its subcellular location is the cell inner membrane. In terms of biological role, produces ATP from ADP in the presence of a proton gradient across the membrane. The sequence is that of ATP synthase epsilon chain from Burkholderia thailandensis (strain ATCC 700388 / DSM 13276 / CCUG 48851 / CIP 106301 / E264).